A 241-amino-acid polypeptide reads, in one-letter code: Thiamine import ATP-binding protein ThiQ (241 aa).

The region spanning 7 to 235 (IRLSDVRFSY…AGPEALRHYI (229 aa)) is the ABC transporter domain. An ATP-binding site is contributed by 37–44 (GPSGSGKS).

It belongs to the ABC transporter superfamily. Thiamine importer (TC 3.A.1.19.1) family. In terms of assembly, the complex is composed of two ATP-binding proteins (ThiQ), two transmembrane proteins (ThiP) and a solute-binding protein (ThiB).

It localises to the cell inner membrane. The enzyme catalyses thiamine(out) + ATP + H2O = thiamine(in) + ADP + phosphate + H(+). Its function is as follows. Part of the ABC transporter complex ThiBPQ involved in thiamine import. Responsible for energy coupling to the transport system. This is Thiamine import ATP-binding protein ThiQ from Brucella abortus biovar 1 (strain 9-941).